A 378-amino-acid chain; its full sequence is Transmembrane 6 superfamily member 2 (378 aa).

10 helical membrane passes run 10–30 (TVAM…VSAF), 34–54 (LFVV…VYSL), 63–83 (PLYA…VIAL), 110–130 (IFIC…MAGA), 140–160 (LGLY…PGNI), 170–190 (PTFF…VRIF), 219–239 (LALI…GLVV), 269–289 (MLMY…ALAF), 291–311 (GCSW…QAQF), and 332–352 (TWAT…LLAF). 2 consecutive EXPERA domains span residues 61-186 (YDPL…CWAG) and 217-351 (ADLA…HLLA).

It belongs to the TM6SF family. As to expression, highly expressed in the liver at both the mRNA and protein levels.

It is found in the endoplasmic reticulum membrane. The protein resides in the endoplasmic reticulum-Golgi intermediate compartment membrane. Regulator of liver fat metabolism influencing triglyceride secretion and hepatic lipid droplet content. May function as sterol isomerase. The protein is Transmembrane 6 superfamily member 2 (Tm6sf2) of Mus musculus (Mouse).